We begin with the raw amino-acid sequence, 674 residues long: RNA polymerase sigma factor RpoD (674 aa).

Residues 214–252 are disordered; the sequence is AEGAAPAARRPASDEPEYDADGNPISRIDEEEDDDDSSN. The tract at residues 440 to 510 is sigma-70 factor domain-2; the sequence is MVEANLRLVI…TRSIADQART (71 aa). The Interaction with polymerase core subunit RpoC motif lies at 464 to 467; sequence DLIQ. The sigma-70 factor domain-3 stretch occupies residues 519-595; that stretch reads ETINKLVRTG…DKNAILPLDS (77 aa). The interval 608–661 is sigma-70 factor domain-4; it reads VLASLTPREERVLRMRFGIGMNTDHTLEEVGQQFSVTRERIRQIEAKALRKLKH. Residues 634–653 constitute a DNA-binding region (H-T-H motif); the sequence is LEEVGQQFSVTRERIRQIEA.

This sequence belongs to the sigma-70 factor family. RpoD/SigA subfamily. As to quaternary structure, interacts transiently with the RNA polymerase catalytic core.

The protein localises to the cytoplasm. Functionally, sigma factors are initiation factors that promote the attachment of RNA polymerase to specific initiation sites and are then released. This sigma factor is the primary sigma factor during exponential growth. The polypeptide is RNA polymerase sigma factor RpoD (Rhodobacter capsulatus (strain ATCC BAA-309 / NBRC 16581 / SB1003)).